We begin with the raw amino-acid sequence, 943 residues long: Receptor-like protein 35 (943 aa).

The signal sequence occupies residues 1 to 31 (MTGSWNPTSIIIPVTLSFLLSFIHNFADVVA). The Extracellular segment spans residues 32 to 897 (APTRHLCLPE…EEEDEEEISW (866 aa)). Asn67, Asn82, Asn118, Asn147, Asn171, Asn195, Asn219, and Asn222 each carry an N-linked (GlcNAc...) asparagine glycan. LRR repeat units lie at residues 124–148 (LQNLRVLDLTQNDLDGEIPSSIGNL), 150–171 (HLTSLHLSYNQFLGLIPSSIEN), 172–196 (LSRLTSLHLSSNQFSGQIPSSIGNL), 198–220 (HLTSLELSSNQFSGQIPSSIGNL), 222–244 (NLTFLSLPSNDFFGQIPSSIGNL), 245–267 (ARLTYLYLSYNNFVGEIPSSFGN), 268–292 (LNQLIVLQVDSNKLSGNVPISLLNL), 293–317 (TRLSALLLSHNQFTGTIPNNISLLS), 319–340 (LMDFEASNNAFTGTLPSSLFNI), 341–364 (PPLIRLDLSDNQLNGTLHFGNISS), and 366–389 (SNLQYLIIGSNNFIGTIPRSLSRF). N-linked (GlcNAc...) asparagine glycosylation is found at Asn291 and Asn312. 2 N-linked (GlcNAc...) asparagine glycosylation sites follow: Asn354 and Asn361. The stretch at 390 to 414 (VNLTLFDLSHLNTQCRPVDFSIFSH) is one LRR 12; degenerate repeat. A glycan (N-linked (GlcNAc...) asparagine) is linked at Asn391. LRR repeat units lie at residues 415–439 (LKSLDDLRLSYLTTTTIDLNDILPY), 440–463 (FKTLRSLDISGNLVSATNKSSVSS), 467–490 (SQSIQSLYLSGCGITDFPEILRTQ), 491–514 (HELGFLDVSNNKIKGQVPGWLWTL), 515–537 (PNLFYLNLSNNTFISFESSSKKH), 544–568 (KPSMIHLFASNNNFTGKIPSFICGL), 569–592 (RSLNTLDLSENNYNGSIPRCMEKL), 593–617 (KSTLFVLNLRQNNLSGGLPKHIFES), 619–639 (RSLDVGHNLLVGKLPRSLIRF), 640–665 (SNLEVLNVESNRINDTFPFWLSSLSK), 667–685 (QVLVLRSNAFHGPIHEATF), 686–709 (PELRIIDISHNHFNGTLPTEYFVK), 753–777 (LTIYTALDFSGNKFEGEIPKSIGLL), 778–801 (KELLVLNLSNNAFGGHIPSSMGNL), 802–825 (TALESLDVSQNKLTGEIPQELGDL), and 827–850 (FLAYMNFSHNQLAGLVPGGTQFRR). N-linked (GlcNAc...) asparagine glycosylation occurs at Asn457. N-linked (GlcNAc...) asparagine glycosylation is found at Asn521, Asn524, Asn556, Asn582, and Asn605. N-linked (GlcNAc...) asparagine glycosylation is present at Asn653. Asn699 carries N-linked (GlcNAc...) asparagine glycosylation. 2 N-linked (GlcNAc...) asparagine glycosylation sites follow: Asn784 and Asn800. 3 N-linked (GlcNAc...) asparagine glycosylation sites follow: Asn832, Asn852, and Asn882. A helical membrane pass occupies residues 898 to 918 (IAAAIGFIPGIVFGLTIGYIL). Topologically, residues 919–943 (VSYKPEWFMNPFGRNNRRRRNTTTH) are cytoplasmic.

This sequence belongs to the RLP family.

The protein localises to the cell membrane. The chain is Receptor-like protein 35 from Arabidopsis thaliana (Mouse-ear cress).